An 878-amino-acid chain; its full sequence is Fanconi-associated nuclease 1 homolog (878 aa).

A UBZ4-type zinc finger spans residues 32–59 (GKTCPLCNIKFSLASYRSHMNVCKVADD). Cys35, Cys38, His50, and Cys54 together coordinate Zn(2+). Residues 88–180 (ENSGQEIPVN…QKSQSESQEA (93 aa)) are disordered. The segment covering 142-161 (SEVRSVEKEIKKSPVWENRR) has biased composition (basic and acidic residues). Over residues 168 to 179 (QNSQKSQSESQE) the composition is skewed to low complexity. Mn(2+)-binding residues include Glu695, Asp823, Glu838, and Val839. The region spanning 757-870 (QETIEDNIRR…GIKAEVCHVE (114 aa)) is the VRR-NUC domain.

It belongs to the FAN1 family. It depends on Mn(2+) as a cofactor. Mg(2+) serves as cofactor.

It localises to the nucleus. The catalysed reaction is Hydrolytically removes 5'-nucleotides successively from the 3'-hydroxy termini of 3'-hydroxy-terminated oligonucleotides.. Nuclease required for the repair of DNA interstrand cross-links (ICL). Acts as a 5'-3' exonuclease that anchors at a cut end of DNA and cleaves DNA successively at every third nucleotide, allowing to excise an ICL from one strand through flanking incisions. The sequence is that of Fanconi-associated nuclease 1 homolog (fan-1) from Caenorhabditis briggsae.